The sequence spans 218 residues: Cytochrome b6 (218 aa).

Residues 35–55 traverse the membrane as a helical segment; it reads IFYCLGGITLVCFLIQFATGF. Cys38 provides a ligand contact to heme c. Heme b-binding residues include His89 and His103. 3 consecutive transmembrane segments (helical) span residues 93-113, 119-139, and 189-209; these read ASMMVLMLILHVFRVYLTGGF, LTWVTGVTMAVITVSFGVTGY, and LHTFVMPWLLAVFMLMHFLMI. 2 residues coordinate heme b: His190 and His205.

It belongs to the cytochrome b family. PetB subfamily. As to quaternary structure, the 4 large subunits of the cytochrome b6-f complex are cytochrome b6, subunit IV (17 kDa polypeptide, PetD), cytochrome f and the Rieske protein, while the 4 small subunits are PetG, PetL, PetM and PetN. The complex functions as a dimer. It depends on heme b as a cofactor. Heme c is required as a cofactor.

The protein resides in the cellular thylakoid membrane. Component of the cytochrome b6-f complex, which mediates electron transfer between photosystem II (PSII) and photosystem I (PSI), cyclic electron flow around PSI, and state transitions. This Synechococcus sp. (strain CC9605) protein is Cytochrome b6.